We begin with the raw amino-acid sequence, 311 residues long: Methionyl-tRNA formyltransferase (311 aa).

Serine 110–proline 113 serves as a coordination point for (6S)-5,6,7,8-tetrahydrofolate.

Belongs to the Fmt family.

The enzyme catalyses L-methionyl-tRNA(fMet) + (6R)-10-formyltetrahydrofolate = N-formyl-L-methionyl-tRNA(fMet) + (6S)-5,6,7,8-tetrahydrofolate + H(+). In terms of biological role, attaches a formyl group to the free amino group of methionyl-tRNA(fMet). The formyl group appears to play a dual role in the initiator identity of N-formylmethionyl-tRNA by promoting its recognition by IF2 and preventing the misappropriation of this tRNA by the elongation apparatus. In Streptococcus pyogenes serotype M12 (strain MGAS2096), this protein is Methionyl-tRNA formyltransferase.